Reading from the N-terminus, the 302-residue chain is Dihydroorotate dehydrogenase B (NAD(+)), catalytic subunit (302 aa).

FMN contacts are provided by residues Ser-23 and 47-48; that span reads KG. Substrate contacts are provided by residues Lys-47 and 71–75; that span reads NSVGL. Asn-101 and Asn-128 together coordinate FMN. Asn-128 is a substrate binding site. Residue Cys-131 is the Nucleophile of the active site. Residues Lys-166 and Ile-192 each contribute to the FMN site. A substrate-binding site is contributed by 193–194; it reads NT. FMN-binding positions include Gly-218, 244-245, and 266-267; these read GG and GT.

It belongs to the dihydroorotate dehydrogenase family. Type 1 subfamily. As to quaternary structure, heterotetramer of 2 PyrK and 2 PyrD type B subunits. Requires FMN as cofactor.

The protein localises to the cytoplasm. The catalysed reaction is (S)-dihydroorotate + NAD(+) = orotate + NADH + H(+). Its pathway is pyrimidine metabolism; UMP biosynthesis via de novo pathway; orotate from (S)-dihydroorotate (NAD(+) route): step 1/1. Catalyzes the conversion of dihydroorotate to orotate with NAD(+) as electron acceptor. The polypeptide is Dihydroorotate dehydrogenase B (NAD(+)), catalytic subunit (pyrD) (Alkaliphilus oremlandii (strain OhILAs) (Clostridium oremlandii (strain OhILAs))).